The sequence spans 202 residues: Elongation factor Ts, chloroplastic (202 aa).

The protein belongs to the EF-Ts family.

Its subcellular location is the plastid. It localises to the chloroplast. In terms of biological role, associates with the EF-Tu.GDP complex and induces the exchange of GDP to GTP. It remains bound to the aminoacyl-tRNA.EF-Tu.GTP complex up to the GTP hydrolysis stage on the ribosome. This is Elongation factor Ts, chloroplastic (tsf) from Phaeodactylum tricornutum (strain CCAP 1055/1).